Consider the following 81-residue polypeptide: Photosystem I iron-sulfur center (81 aa).

2 4Fe-4S ferredoxin-type domains span residues 2 to 31 and 39 to 68; these read AHTV…MVPW and IASA…IRVY. The [4Fe-4S] cluster site is built by cysteine 11, cysteine 14, cysteine 17, cysteine 21, cysteine 48, cysteine 51, cysteine 54, and cysteine 58.

In terms of assembly, the eukaryotic PSI reaction center is composed of at least 11 subunits. [4Fe-4S] cluster is required as a cofactor.

It localises to the plastid. The protein localises to the cyanelle thylakoid membrane. It catalyses the reaction reduced [plastocyanin] + hnu + oxidized [2Fe-2S]-[ferredoxin] = oxidized [plastocyanin] + reduced [2Fe-2S]-[ferredoxin]. Functionally, apoprotein for the two 4Fe-4S centers FA and FB of photosystem I (PSI); essential for photochemical activity. FB is the terminal electron acceptor of PSI, donating electrons to ferredoxin. The C-terminus interacts with PsaA/B/D and helps assemble the protein into the PSI complex. Required for binding of PsaD and PsaE to PSI. PSI is a cytochrome c6-ferredoxin oxidoreductase, converting photonic excitation into a charge separation, which transfers an electron from the donor P700 chlorophyll pair to the spectroscopically characterized acceptors A0, A1, FX, FA and FB in turn. In Cyanophora paradoxa, this protein is Photosystem I iron-sulfur center.